A 163-amino-acid polypeptide reads, in one-letter code: UPF0262 protein RPE_4483 (163 aa).

Belongs to the UPF0262 family.

The chain is UPF0262 protein RPE_4483 from Rhodopseudomonas palustris (strain BisA53).